Consider the following 152-residue polypeptide: Aspartate carbamoyltransferase regulatory chain (152 aa).

Zn(2+) is bound by residues Cys108, Cys113, Cys137, and Cys140.

Belongs to the PyrI family. In terms of assembly, contains catalytic and regulatory chains. Zn(2+) is required as a cofactor.

Its function is as follows. Involved in allosteric regulation of aspartate carbamoyltransferase. This is Aspartate carbamoyltransferase regulatory chain from Neisseria meningitidis serogroup B (strain ATCC BAA-335 / MC58).